We begin with the raw amino-acid sequence, 660 residues long: Putative ABC transporter ATP-binding MG390 homolog (660 aa).

Positions 6–126 constitute a Peptidase C39 domain; the sequence is QEQPNECGIC…KQWTGYAATV (121 aa). C12 is a catalytic residue. 6 helical membrane passes run 150 to 170, 188 to 208, 265 to 285, 290 to 310, 379 to 399, and 402 to 422; these read LIIF…LLAT, IVVF…LYAL, HIPN…LIGI, FLWI…YDFF, SFAQ…GIIE, and YTLA…AYAT. In terms of domain architecture, ABC transporter spans 464-660; the sequence is INLNNCSITL…INLSPYLQQT (197 aa). 494 to 501 is a binding site for ATP; that stretch reads GENGSGKS.

Belongs to the ABC transporter superfamily.

Its subcellular location is the cell membrane. In Mycoplasma pneumoniae (strain ATCC 29342 / M129 / Subtype 1) (Mycoplasmoides pneumoniae), this protein is Putative ABC transporter ATP-binding MG390 homolog.